A 236-amino-acid chain; its full sequence is MTNPPSTDYSRAGAGLRIGVLALQGDFREHLRAAEATGATGIGIRRPSELDGIDGLIIPGGESTAIDKLARAFELADPLRKLIAEGLPVYGSCAGMILLADEIADPATDLAGNPQQTFGGLDITVRRNAFGRQRESFEIDLEFKGLGFSDTGSGVAPVHAVFIRGPWVERVGPGVEVLAQVEPADPAHASHAAALQGTARIVAVRSGHLLATSFHPEVTGEKRVHELFIRMIRGEA.

L-glutamine is bound at residue 61 to 63 (GES). Catalysis depends on Cys-93, which acts as the Nucleophile. L-glutamine-binding positions include Arg-127 and 163 to 164 (IR). Active-site charge relay system residues include His-215 and Glu-217.

This sequence belongs to the glutaminase PdxT/SNO family. In terms of assembly, in the presence of PdxS, forms a dodecamer of heterodimers. Only shows activity in the heterodimer.

It carries out the reaction aldehydo-D-ribose 5-phosphate + D-glyceraldehyde 3-phosphate + L-glutamine = pyridoxal 5'-phosphate + L-glutamate + phosphate + 3 H2O + H(+). The catalysed reaction is L-glutamine + H2O = L-glutamate + NH4(+). Its pathway is cofactor biosynthesis; pyridoxal 5'-phosphate biosynthesis. Functionally, catalyzes the hydrolysis of glutamine to glutamate and ammonia as part of the biosynthesis of pyridoxal 5'-phosphate. The resulting ammonia molecule is channeled to the active site of PdxS. This Arthrobacter sp. (strain FB24) protein is Pyridoxal 5'-phosphate synthase subunit PdxT.